Consider the following 333-residue polypeptide: Fructose-1,6-bisphosphatase class 1 (333 aa).

Residues Glu-92, Asp-113, Leu-115, and Asp-116 each contribute to the Mg(2+) site. Residues 116 to 119 (DGSS), Asn-209, Tyr-242, and Lys-272 each bind substrate. Glu-278 provides a ligand contact to Mg(2+).

It belongs to the FBPase class 1 family. In terms of assembly, homotetramer. It depends on Mg(2+) as a cofactor.

Its subcellular location is the cytoplasm. The enzyme catalyses beta-D-fructose 1,6-bisphosphate + H2O = beta-D-fructose 6-phosphate + phosphate. The protein operates within carbohydrate biosynthesis; Calvin cycle. The chain is Fructose-1,6-bisphosphatase class 1 from Chlorobaculum tepidum (strain ATCC 49652 / DSM 12025 / NBRC 103806 / TLS) (Chlorobium tepidum).